Consider the following 384-residue polypeptide: S-adenosylmethionine synthase (384 aa).

Histidine 15 contributes to the ATP binding site. Position 17 (aspartate 17) interacts with Mg(2+). Glutamate 43 is a K(+) binding site. 2 residues coordinate L-methionine: glutamate 56 and glutamine 99. The tract at residues 99-109 is flexible loop; it reads QSPDINQGVDR. Residues 164 to 166, 230 to 231, aspartate 239, 245 to 246, alanine 262, and lysine 266 each bind ATP; these read DAK, RF, and RK. Residue aspartate 239 participates in L-methionine binding. An L-methionine-binding site is contributed by lysine 270.

It belongs to the AdoMet synthase family. Homotetramer; dimer of dimers. The cofactor is Mg(2+). K(+) serves as cofactor.

The protein localises to the cytoplasm. It catalyses the reaction L-methionine + ATP + H2O = S-adenosyl-L-methionine + phosphate + diphosphate. It participates in amino-acid biosynthesis; S-adenosyl-L-methionine biosynthesis; S-adenosyl-L-methionine from L-methionine: step 1/1. Catalyzes the formation of S-adenosylmethionine (AdoMet) from methionine and ATP. The overall synthetic reaction is composed of two sequential steps, AdoMet formation and the subsequent tripolyphosphate hydrolysis which occurs prior to release of AdoMet from the enzyme. This Shigella boydii serotype 18 (strain CDC 3083-94 / BS512) protein is S-adenosylmethionine synthase.